The chain runs to 377 residues: MKIDEVNFKDKTKVTVFSGMQPTSSALHLGNYLGAMGNWLKIQDLVTKNNKEEEELLNLSESSSSSSSSQSTKINEKHKLIFSIVDLHSLTSTKSLSPKELQSNTISVAINYLACGIDPEKVILFNQSMVPAHSELTWILNCITSFSKLSNMIQFKEKTKSSNEASVSNGLLSYPVLMAADILLYKATHVPVGEDQTQHLEFTRDIAQAFHSNFKSKFFPYPSIITSEQSKRIMSLQDGRLKMSKSDPLEISRISLTDTDDQIKLKIKKSKTDTIIGITYDPINRPDISNLLSIASETSGIPITDLQSEFKDKSNAIFKEFLSNSIIKNISPIREKINYYQSNPKLVRDILLQGSEKANKIANKNLNIIKDIVGLYH.

ATP is bound by residues glutamine 21 and 28 to 31; that span reads HLGN. The 'HIGH' region motif lies at 22–31; that stretch reads PTSSALHLGN. Aspartate 181 provides a ligand contact to L-tryptophan. Residues 193 to 195, 242 to 246, and lysine 245 contribute to the ATP site; these read GED and KMSKS. A 'KMSKS' region motif is present at residues 242–246; sequence KMSKS.

Belongs to the class-I aminoacyl-tRNA synthetase family.

The protein resides in the mitochondrion matrix. The enzyme catalyses tRNA(Trp) + L-tryptophan + ATP = L-tryptophyl-tRNA(Trp) + AMP + diphosphate + H(+). In Dictyostelium discoideum (Social amoeba), this protein is Tryptophan--tRNA ligase, mitochondrial (wars2).